The following is a 271-amino-acid chain: Calretinin (271 aa).

EF-hand domains lie at 16–51 (LTATQFLEIWKHFDADGNGYIEGKELENFFQELEKA), 63–98 (NLGEKMKEFMQKYDKNSDGKIEMAELAQILPTEENF), 107–142 (GSSTEFMEAWRKYDTDRSGYIEANELKGFLSDLLKK), 151–186 (KLQEYTQTILRMFDLNGDGKLGLSEMSRLLPVQENF), 195–230 (LTSEEFNAIFTFYDKDGSGYIDENELDALLKDLYEK), and 235–270 (MNIQQLTSYRKSVMSLAEAEKLYRKDLEIVLCSEPP). Ca(2+)-binding residues include Asp29, Asp31, Asn33, Tyr35, Glu40, Asp76, Asn78, Asp80, Lys82, Glu87, Asp120, Asp122, Ser124, Tyr126, Glu131, Asp164, Asn166, Asp168, Lys170, Glu175, Asp208, Asp210, Ser212, Tyr214, and Glu219. Tyr214 bears the Phosphotyrosine mark.

It belongs to the calbindin family.

Its subcellular location is the synapse. It is found in the cell projection. It localises to the dendrite. Functionally, calcium-binding protein involved in calcium homeostasis and signal transduction. It plays a critical role in buffering intracellular calcium levels and modulating calcium-dependent signaling pathways. Predominantly expressed in specific neuronal populations, influences synaptic plasticity and neuronal excitability, contributing to learning and memory. During embryonic development, it facilitates neuronal differentiation and maturation. The sequence is that of Calretinin (CALB2) from Bos taurus (Bovine).